Reading from the N-terminus, the 275-residue chain is Light-independent protochlorophyllide reductase iron-sulfur ATP-binding protein (275 aa).

ATP-binding positions include 10–15 and K39; that span reads GIGKST. S14 is a binding site for Mg(2+). 2 residues coordinate [4Fe-4S] cluster: C95 and C129. ATP is bound at residue 180-181; it reads NR.

Belongs to the NifH/BchL/ChlL family. As to quaternary structure, homodimer. Protochlorophyllide reductase is composed of three subunits; ChlL, ChlN and ChlB. Requires [4Fe-4S] cluster as cofactor.

It carries out the reaction chlorophyllide a + oxidized 2[4Fe-4S]-[ferredoxin] + 2 ADP + 2 phosphate = protochlorophyllide a + reduced 2[4Fe-4S]-[ferredoxin] + 2 ATP + 2 H2O. The protein operates within porphyrin-containing compound metabolism; chlorophyll biosynthesis (light-independent). Its function is as follows. Component of the dark-operative protochlorophyllide reductase (DPOR) that uses Mg-ATP and reduced ferredoxin to reduce ring D of protochlorophyllide (Pchlide) to form chlorophyllide a (Chlide). This reaction is light-independent. The L component serves as a unique electron donor to the NB-component of the complex, and binds Mg-ATP. The chain is Light-independent protochlorophyllide reductase iron-sulfur ATP-binding protein from Gloeobacter violaceus (strain ATCC 29082 / PCC 7421).